The chain runs to 525 residues: Histidine-rich glycoprotein (525 aa).

An N-terminal signal peptide occupies residues 1–18 (MKALIAALLLITLQYSCA). Cystatin domains are found at residues 19-136 (VSPT…SALA) and 137-254 (NTKD…NING). 5 disulfide bridges follow: C24/C504, C78/C89, C105/C126, C203/C417, and C218/C241. Residues 41 to 84 (RRRDGYLFQLLRIADAHLDRVENTTVYYLVLDVQESDCSVLSRK) are interaction with ATP5F1A. N63 is a glycosylation site (N-linked (GlcNAc...) asparagine). N125 carries N-linked (GlcNAc...) asparagine glycosylation. The interval 252–407 (INGVPPHLGH…GHHPHGHHPH (156 aa)) is disordered. Positions 284-293 (RDHHHPHKPH) are enriched in basic residues. Positions 310–320 (PPLPQGPPPLL) are enriched in pro residues. The segment covering 323–348 (SCSSCQHATFGTNGAQRHSHNNNSSD) has biased composition (polar residues). 2 N-linked (GlcNAc...) asparagine glycosylation sites follow: N344 and N345. Residues 348–382 (DLHPHKHHSHEQHPHGHHPHAHHPHEHDTHRQHPH) are necessary for endothelial cell focal adhesions and anti-angiogenic activities. Composition is skewed to basic residues over residues 351–371 (PHKH…AHHP) and 379–407 (QHPH…HHPH).

As to quaternary structure, interacts (via the HRR domain) with TPM1; the interaction appears to contribute to the antiangiogenic properties of the HRR domain. Interacts with THBS2; the interaction blocks the antiangiogenic effect of THBS2 with CD36. Interacts with THBS1 (via the TSP type I repeats); the interaction blocks the antiangiogenic effect of THBS1 with CD3. Interacts with PLG (via its Kringle domains); the interaction tethers PLG to the cell surface and enhances its activation. Interacts with HPSE; the interaction is enhanced at acidic pH, partially inhibits binding of HPSE to cell surface receptors and modulates its enzymatic activity. Interacts (via the HRR domain) with TMP1; the interaction partially mediates the antiangiogenic properties of HRG. Interacts with kappa and lambda light chains of IgG molecules. Interacts with ATP5F1A; the interaction occurs on the surface of T-cells and alters their cell morphology in concert with CONA. Binds IgG molecules containing kappa and lambda light chains and inhibits the formation of insoluble immunoglobulin complexes. Interacts with F12; the interaction, which is enhanced in the presence of zinc ions and inhibited by heparin-binding to HRG, inhibits factor XII autoactivation and contact-initiated coagulation. It depends on Zn(2+) as a cofactor. Proteolytic cleavage produces several HRG fragments which are mostly disulfide-linked and, therefore, not released. Cleavage by plasmin is inhibited in the presence of heparin, zinc ions or in an acidic environment. Cleavage reduces binding of HRG to heparan sulfate, but enhances the ability of HRG to bind and tether plasminogen to the cell surface. On platelet activation, releases a 33 kDa antiangiogenic peptide which encompasses the HRR. Also cleaved in the C-terminal by plasmin. Post-translationally, N-glycosylated. In terms of tissue distribution, expressed in macrophages and in malignant cells. Expressed by the liver and secreted in plasma (at protein level).

The protein localises to the secreted. In terms of biological role, plasma glycoprotein that binds a number of ligands such as heme, heparin, heparan sulfate, thrombospondin, plasminogen, and divalent metal ions. Binds heparin and heparin/glycosaminoglycans in a zinc-dependent manner. Binds heparan sulfate on the surface of liver, lung, kidney and heart endothelial cells. Binds to N-sulfated polysaccharide chains on the surface of liver endothelial cells. Inhibits rosette formation. Acts as an adapter protein and is implicated in regulating many processes such as immune complex and pathogen clearance, cell chemotaxis, cell adhesion, angiogenesis, coagulation and fibrinolysis. Mediates clearance of necrotic cells through enhancing the phagocytosis of necrotic cells in a heparan sulfate-dependent pathway. This process can be regulated by the presence of certain HRG ligands such as heparin and zinc ions. Binds to IgG subclasses of immunoglobins containing kappa and lambda light chains with different affinities regulating their clearance and inhibiting the formation of insoluble immune complexes. Tethers plasminogen to the cell surface. Binds T-cells and alters the cell morphology. Modulates angiogenesis by blocking the CD6-mediated antiangiongenic effect of thrombospondins, THBS1 and THBS2. Acts as a regulator of the vascular endothelial growth factor (VEGF) signaling pathway; inhibits endothelial cell motility by reducing VEGF-induced complex formation between PXN/paxillin and ILK/integrin-linked protein kinase and by promoting inhibition of VEGF-induced tyrosine phosphorylation of focal adhesion kinases and alpha-actinins in endothelial cells. Also plays a role in the regulation of tumor angiogenesis and tumor immune surveillance. Normalizes tumor vessels and promotes antitumor immunity by polarizing tumor-associated macrophages, leading to decreased tumor growth and metastasis. This Homo sapiens (Human) protein is Histidine-rich glycoprotein (HRG).